Reading from the N-terminus, the 355-residue chain is MSFDVLTINPGSTSTKLAVYQGDKVLFEETVRHTMQEFADFNNVQEQFDFRWQVLRRVIDAFGYDVNNLDAVVGRGGLLRPVAGGTYMVTEKMLADLKTNKYGEHASNLGAMLAKKLADTLDIPSFIVDPVVVDEMLPIARFSGNELIARKSIFHALNHKAAGRKIAKKLGSDYEKLNFVIAHLGGGISVAAHRQGKAVDVNNALDGDGPFSPERSGSLPMNDFLEACFSGKWNKRELHDLIIGRGGMISYLGTNSMLEVEAKVKAGDEKAIQAFDAMAYQVSKEIGACSTVLHGKIDAIILTGGLARSDLFTSKIIEQTNWIASVIIEPGEDELEALNSGVQRVLAGLEKEKLY.

This sequence belongs to the acetokinase family.

It localises to the cytoplasm. It catalyses the reaction butanoate + ATP = butanoyl phosphate + ADP. The sequence is that of Probable butyrate kinase from Listeria welshimeri serovar 6b (strain ATCC 35897 / DSM 20650 / CCUG 15529 / CIP 8149 / NCTC 11857 / SLCC 5334 / V8).